The following is a 725-amino-acid chain: MTMFNKIVKEFQWGQHTVRMETGEIARQASGAVIVDVEDTVVLATVVAAKSPKAGQDFFPLTVDYIEKTYAAGKIPGGFFKREGRPSENETLTSRLIDRPLRPLFPEGFYNDVQVVIHVLSINPEIPADIPALIASSAALAVSGIPFNGPVGAARVGYKDGQYLLNPTRAQIAASDLDLVVAGTERAVLMVESEAHQLSEDVMLGAVVYGHEQMQIAINAIHDLVREGGKPEWDWAPAPKNEALIAKVSEIGLPLLQQAYQLRQKSARSTKLKEIYATVQAQLAEAGVEADKVEVGNVLFDLEAKIVRGQILAGEPRIDGRDTRTVRPIEIRSSVLPRAHGSALFTRGETQALVVATLGTKSDEQIIDALAGEYRDRFMLHYNMPPFATGETGRVGSPKRREIGHGRLAKRALIPVLPKDDEFAYTIRLVSEITESNGSSSMASVCGGCLALMDAGVPVKAHVAGVAMGLILEGNKFAVLTDILGDEDHLGDMDFKVAGTDAGITALQMDIKVQGITKEIMQVALAQAREGRMHILGAMQGAMGHARTELSAHAPRMITMKIHPDKIREVIGKGGSTIQALTKETGTTIDIQEDGTITIASTSTDGMAEAKRRIEGITAEAEVGKIYAGTVLKLLDFGAIVNILPGKDGLLHISEIVNERVKDIKDWLKEGQQVRVKLIQADEKGRLRLSLKAALAEEGGSISPIAQGDAPAAAPAAPASPDQQQ.

Aspartate 488 and aspartate 494 together coordinate Mg(2+). A KH domain is found at 555 to 614; the sequence is PRMITMKIHPDKIREVIGKGGSTIQALTKETGTTIDIQEDGTITIASTSTDGMAEAKRRI. Residues 624–692 form the S1 motif domain; that stretch reads GKIYAGTVLK…EKGRLRLSLK (69 aa). The interval 702–725 is disordered; sequence ISPIAQGDAPAAAPAAPASPDQQQ. Residues 706 to 725 are compositionally biased toward low complexity; the sequence is AQGDAPAAAPAAPASPDQQQ.

The protein belongs to the polyribonucleotide nucleotidyltransferase family. It depends on Mg(2+) as a cofactor.

Its subcellular location is the cytoplasm. It carries out the reaction RNA(n+1) + phosphate = RNA(n) + a ribonucleoside 5'-diphosphate. Involved in mRNA degradation. Catalyzes the phosphorolysis of single-stranded polyribonucleotides processively in the 3'- to 5'-direction. This Cupriavidus metallidurans (strain ATCC 43123 / DSM 2839 / NBRC 102507 / CH34) (Ralstonia metallidurans) protein is Polyribonucleotide nucleotidyltransferase.